We begin with the raw amino-acid sequence, 80 residues long: Dolichol-phosphate mannose synthase subunit 2 (80 aa).

Helical transmembrane passes span 10–30 and 50–70; these read LLLS…VIIL and ILVP…FIGM.

This sequence belongs to the DPM2 family. In terms of assembly, component of the dolichol-phosphate mannose (DPM) synthase complex composed of DPMS1, DPMS2 and DPMS3; in the complex interacts directly with DPMS3. Associates with the GPI-GlcNAc transferase (GPI-GnT) complex.

Its subcellular location is the endoplasmic reticulum membrane. It participates in protein modification; protein glycosylation. In terms of biological role, regulates the biosynthesis of dolichol phosphate-mannose. Regulatory subunit of the dolichol-phosphate mannose (DPM) synthase complex; essential for the ER localization and stable expression of DPMS1. The polypeptide is Dolichol-phosphate mannose synthase subunit 2 (Arabidopsis thaliana (Mouse-ear cress)).